We begin with the raw amino-acid sequence, 503 residues long: T-complex protein 11 homolog (503 aa).

Positions 1 to 22 (MPDVKESVPPKYPGDSEGRSCK) are enriched in basic and acidic residues. 2 disordered regions span residues 1–42 (MPDV…PPPF) and 254–285 (DLTM…NPEP). Residues 263-285 (PDTSDSSSVAGPSPNEAANNPEP) are compositionally biased toward low complexity. Residues 330 to 349 (LTVMASVLLVASSFSGSVLF) form a helical membrane-spanning segment.

Belongs to the TCP11 family. In terms of assembly, found in a complex at least composed of MROH2B, PRKACA isoform 2 and TCP11. Interacts with MROH2B. Interacts with PRKACA isoform 2. Isoform 2 and isoform 3 interact with ODF1 (via leucine zipper motif). Post-translationally, constitutively phosphorylated on serine, threonine and tyrosine residues within the head and tail regions of noncapacitated spermatozoa. Phosphorylation on tyrosine residues increases upon sperm capacitation within the acrosomal region in a protein kinase A (PKA)-dependent signaling pathway. In terms of tissue distribution, isoform 2 and isoform 3 are expressed in sperm. Isoform 1 is not detected in sperm (at protein level). Testis-specific. Isoform 1, isoform 2 and isoform 3 are expressed in sperm.

The protein resides in the membrane. It localises to the cell projection. It is found in the cilium. The protein localises to the flagellum. Its subcellular location is the cytoplasmic vesicle. The protein resides in the secretory vesicle. It localises to the acrosome. Plays a role in the process of sperm capacitation and acrosome reactions. Probable receptor for the putative fertilization-promoting peptide (FPP) at the sperm membrane that may modulate the activity of the adenylyl cyclase cAMP pathway. The chain is T-complex protein 11 homolog (TCP11) from Homo sapiens (Human).